Consider the following 414-residue polypeptide: Histidine--tRNA ligase (414 aa).

It belongs to the class-II aminoacyl-tRNA synthetase family. As to quaternary structure, homodimer.

Its subcellular location is the cytoplasm. The enzyme catalyses tRNA(His) + L-histidine + ATP = L-histidyl-tRNA(His) + AMP + diphosphate + H(+). The polypeptide is Histidine--tRNA ligase (Mycoplasma capricolum subsp. capricolum (strain California kid / ATCC 27343 / NCTC 10154)).